The primary structure comprises 476 residues: Monofunctional riboflavin biosynthesis protein RIBA 2, chloroplastic (476 aa).

The transit peptide at 1–54 (MASLTLRCDSTHLLPSRDVVKGTKPFGTSLVYPRIISKKFNVRMRVIPEEGDVF) directs the protein to the chloroplast. The segment at 44–306 (MRVIPEEGDV…IADLIRYRRK (263 aa)) is DHBP synthase. D-ribulose 5-phosphate contacts are provided by residues 130 to 131 (RE), Asp135, 245 to 249 (RAGHT), and Glu269. Glu131 contacts Mg(2+). His248 provides a ligand contact to Mg(2+). Residues 307–476 (RERLVEFTAV…SGKVPLITTP (170 aa)) are inactive GTP cyclohydrolase II. Residues 357–361 (RVHAE), Gln376, 399–401 (ESK), and Thr450 each bind GTP.

In the N-terminal section; belongs to the DHBP synthase family. The protein in the C-terminal section; belongs to the GTP cyclohydrolase II family. Requires Mg(2+) as cofactor. Mn(2+) serves as cofactor. As to expression, expressed in leaves, shoots, roots, flowers and siliques.

It is found in the plastid. It localises to the chloroplast. The enzyme catalyses D-ribulose 5-phosphate = (2S)-2-hydroxy-3-oxobutyl phosphate + formate + H(+). It participates in cofactor biosynthesis; riboflavin biosynthesis; 2-hydroxy-3-oxobutyl phosphate from D-ribulose 5-phosphate: step 1/1. In terms of biological role, involved in riboflavin biosynthesis. Catalyzes the conversion of D-ribulose 5-phosphate to formate and 3,4-dihydroxy-2-butanone 4-phosphate. RIBA2 and RIBA3 together are not able to complement the loss of function of RIBA1. In Arabidopsis thaliana (Mouse-ear cress), this protein is Monofunctional riboflavin biosynthesis protein RIBA 2, chloroplastic (RIBA2).